A 148-amino-acid chain; its full sequence is Putative antiporter subunit mnhG2 (148 aa).

Transmembrane regions (helical) follow at residues 11–31, 51–71, and 72–92; these read IAAIMIFLGSIIALISSIGLI, VLLTLVGVIIFFISSQGYLSV, and RLILALVFINLTSPVGGHLIS. A disordered region spans residues 125–148; sequence EQLKQRAHEREERRRKTYEKEHDY. Positions 127 to 148 are enriched in basic and acidic residues; the sequence is LKQRAHEREERRRKTYEKEHDY.

Belongs to the CPA3 antiporters (TC 2.A.63) subunit G family. In terms of assembly, may form a heterooligomeric complex that consists of seven subunits: mnhA2, mnhB2, mnhC2, mnhD2, mnhE2, mnhF2 and mnhG2.

Its subcellular location is the cell membrane. The protein is Putative antiporter subunit mnhG2 (mnhG2) of Staphylococcus saprophyticus subsp. saprophyticus (strain ATCC 15305 / DSM 20229 / NCIMB 8711 / NCTC 7292 / S-41).